The sequence spans 648 residues: Biosynthetic arginine decarboxylase (648 aa).

Position 109 is an N6-(pyridoxal phosphate)lysine (Lys-109). 291–301 (LDVGGGLGVDY) provides a ligand contact to substrate.

Belongs to the Orn/Lys/Arg decarboxylase class-II family. SpeA subfamily. Mg(2+) serves as cofactor. The cofactor is pyridoxal 5'-phosphate.

It catalyses the reaction L-arginine + H(+) = agmatine + CO2. The protein operates within amine and polyamine biosynthesis; agmatine biosynthesis; agmatine from L-arginine: step 1/1. Functionally, catalyzes the biosynthesis of agmatine from arginine. The sequence is that of Biosynthetic arginine decarboxylase from Prochlorococcus marinus (strain MIT 9303).